Reading from the N-terminus, the 339-residue chain is Tetraacyldisaccharide 4'-kinase (339 aa).

ATP is bound at residue 62-69; that stretch reads VAGGTGKT.

Belongs to the LpxK family.

It catalyses the reaction a lipid A disaccharide + ATP = a lipid IVA + ADP + H(+). It functions in the pathway glycolipid biosynthesis; lipid IV(A) biosynthesis; lipid IV(A) from (3R)-3-hydroxytetradecanoyl-[acyl-carrier-protein] and UDP-N-acetyl-alpha-D-glucosamine: step 6/6. Its function is as follows. Transfers the gamma-phosphate of ATP to the 4'-position of a tetraacyldisaccharide 1-phosphate intermediate (termed DS-1-P) to form tetraacyldisaccharide 1,4'-bis-phosphate (lipid IVA). The polypeptide is Tetraacyldisaccharide 4'-kinase (Xylella fastidiosa (strain 9a5c)).